Here is a 443-residue protein sequence, read N- to C-terminus: UDP-N-acetylmuramate--L-alanine ligase (443 aa).

110–116 (GAHGKTS) is an ATP binding site.

The protein belongs to the MurCDEF family.

The protein localises to the cytoplasm. It catalyses the reaction UDP-N-acetyl-alpha-D-muramate + L-alanine + ATP = UDP-N-acetyl-alpha-D-muramoyl-L-alanine + ADP + phosphate + H(+). It participates in cell wall biogenesis; peptidoglycan biosynthesis. Its function is as follows. Cell wall formation. The sequence is that of UDP-N-acetylmuramate--L-alanine ligase from Lactococcus lactis subsp. cremoris (strain MG1363).